Here is a 320-residue protein sequence, read N- to C-terminus: SUMO-activating enzyme subunit 1B-1 (320 aa).

Met1 carries the post-translational modification N-acetylmethionine.

The protein belongs to the ubiquitin-activating E1 family. Heterodimer of SAE1A or SAE1B and SAE2. The complex binds SUMO proteins via SAE2.

It localises to the nucleus. It participates in protein modification; protein sumoylation. Functionally, the dimeric enzyme acts as an E1 ligase for SUMO1 and SUMO2. It mediates ATP-dependent activation of SUMO proteins and formation of a thioester with a conserved cysteine residue on SAE2. Functionally redundant with its paralog SAE1A. This chain is SUMO-activating enzyme subunit 1B-1 (SAE1B-1), found in Arabidopsis thaliana (Mouse-ear cress).